The sequence spans 150 residues: UPF0178 protein Sbal195_1808 (150 aa).

The protein belongs to the UPF0178 family.

This chain is UPF0178 protein Sbal195_1808, found in Shewanella baltica (strain OS195).